The sequence spans 27 residues: Phospholipase A2 2 (27 aa).

The tract at residues 1 to 27 (FMKVIDPGTKWCGPGNKAADDTDNGKN) is disordered. Positions 11, 13, and 15 each coordinate Ca(2+). Residues 18–27 (AADDTDNGKN) are compositionally biased toward basic and acidic residues.

It belongs to the phospholipase A2 family. Ca(2+) is required as a cofactor. In terms of tissue distribution, expressed by the venom gland.

The protein resides in the secreted. The catalysed reaction is a 1,2-diacyl-sn-glycero-3-phosphocholine + H2O = a 1-acyl-sn-glycero-3-phosphocholine + a fatty acid + H(+). Its function is as follows. PLA2 catalyzes the calcium-dependent hydrolysis of the 2-acyl groups in 3-sn-phosphoglycerides. The protein is Phospholipase A2 2 of Opisthacanthus cayaporum (South American scorpion).